The primary structure comprises 515 residues: MDTKYKDDLFRKYVQFHEGKVDTTPGNQQPGSDEYLRVAAATLLSLHKVDPLYRFRLIQFYEVVESSLRSLSSSSLSALHCAFSMLETMAINLFLFPWKKEFRSIKTYTGPFVYYVKSTLLEKDIRAILRFMGYEPELGTVYKLKELVESLQVKMVSFELFLAKVECEQMLGIHSQVKDKGYSELDVVAERKGSTEDARGCSDALRRRAESREHLTTSMARVALQKSASERAAKDYYKPRVTKPSRSVDAYDSYWESRKPPSKASLSLRKEPLAMDVGEDLKDEIIRPSPSLLAMSSSPHGSPDDLSSISSINGLGLLRSTYFSTQDDVDLYTDSEPRATYRRQDALRPDVWLVKNDTHPIYHKRSPPTKESALSKCQNCGLSCSSSLCQRCDSVLVCPSASKPSAFPSKASVHDSLAHGAPMREKYVGHQTQGLDRLAPVHSKPKPSTTATSRCGFCNRAGATNTCTQCSKVSCDACLGAYHYDPCCRKSELHKFLPNSQLNYKSAPFSQLVYR.

The region spanning 78 to 150 (ALHCAFSMLE…VYKLKELVES (73 aa)) is the PUB domain. Positions 321 to 338 (TYFSTQDDVDLYTDSEPR) match the PIM motif motif. The tract at residues 429 to 452 (GHQTQGLDRLAPVHSKPKPSTTAT) is disordered.

Belongs to the SPATA2 family. Interacts (via the PIM motif) with RNF31/HOIP (via the PUB domain); the interaction is direct. Interacts (via the PUB domain) with CYLD; the interaction is direct. As to expression, widely expressed, with highest expression in testis, lung and intestine, and lower expression in brain, heart and spleen. Present at high level in Sertoli cells: expressed from stage I to stage XII of the testis seminiferous epithelium (at protein level).

The protein resides in the cytoplasm. The protein localises to the nucleus. Bridging factor that mediates the recruitment of CYLD to the LUBAC complex, thereby regulating TNF-alpha-induced necroptosis. Acts as a direct binding intermediate that bridges RNF31/HOIP, the catalytic subunit of the LUBAC complex, and the deubiquitinase (CYLD), thereby recruiting CYLD to the TNF-R1 signaling complex (TNF-RSC). Required to activate the 'Met-1'- (linear) and 'Lys-63'-linked deubiquitinase activities of CYLD. Controls the kinase activity of RIPK1 and TNF-alpha-induced necroptosis by promoting 'Met-1'-linked deubiquitination of RIPK1 by CYLD. The chain is Spermatogenesis-associated protein 2 from Mus musculus (Mouse).